A 231-amino-acid chain; its full sequence is Phosphoglycolate phosphatase, plasmid (231 aa).

Residue Asp-14 is the Nucleophile of the active site. Mg(2+)-binding residues include Asp-14, Asp-16, and Asp-175.

Belongs to the HAD-like hydrolase superfamily. CbbY/CbbZ/Gph/YieH family. As to quaternary structure, homotrimer. Requires Mg(2+) as cofactor.

The enzyme catalyses 2-phosphoglycolate + H2O = glycolate + phosphate. Its pathway is organic acid metabolism; glycolate biosynthesis; glycolate from 2-phosphoglycolate: step 1/1. In terms of biological role, specifically catalyzes the dephosphorylation of 2-phosphoglycolate. Is involved in the dissimilation of the intracellular 2-phosphoglycolate formed during the DNA repair of 3'-phosphoglycolate ends, a major class of DNA lesions induced by oxidative stress. This is Phosphoglycolate phosphatase, plasmid (cbbZP) from Cupriavidus necator (strain ATCC 17699 / DSM 428 / KCTC 22496 / NCIMB 10442 / H16 / Stanier 337) (Ralstonia eutropha).